Reading from the N-terminus, the 440-residue chain is Gap junction gamma-2 protein (440 aa).

At 1 to 21 the chain is on the cytoplasmic side; it reads MTNMSWSFLTRLLEEIHNHST. The helical transmembrane segment at 22 to 42 threads the bilayer; that stretch reads FVGKVWLTVLVVFRIVLTAVG. The Extracellular portion of the chain corresponds to 43 to 78; the sequence is GESIYSDEQSKFTCNTRQPGCDNVCYDAFAPLSHVR. A helical transmembrane segment spans residues 79–99; it reads FWVFQIVVISTPSVMYLGYAV. Over 100–223 the chain is Cytoplasmic; sequence HRLARASEQE…AQLVVRAAFE (124 aa). The segment at 108–199 is disordered; it reads QERRRALRRR…TPGPAGQHDG (92 aa). Residues 112-124 show a composition bias toward basic residues; sequence RALRRRPGPRRLP. Residues 150–173 are compositionally biased toward acidic residues; sequence LEEDEDEEPGAPEGPGEDTEEERT. Residues 224 to 244 form a helical membrane-spanning segment; that stretch reads VAFLVGQYLLYGFEVPPFFAC. The Extracellular segment spans residues 245–264; the sequence is SRQPCPHVVDCFVSRPTEKT. A helical membrane pass occupies residues 265-285; it reads VFLLVMYVVSCLCLLLNLCEM. At 286–440 the chain is on the cytoplasmic side; that stretch reads AHLGLGSAQD…SRDGKATVWI (155 aa). The disordered stretch occupies residues 368–440; the sequence is ADRDSPPCSG…SRDGKATVWI (73 aa). Residue Ser-372 is modified to Phosphoserine. Low complexity predominate over residues 380 to 401; sequence ATSRGPPRAGGPASGTGSATSG.

The protein belongs to the connexin family. Gamma-type subfamily. A connexon is composed of a hexamer of connexins. Interacts with TJP1. In terms of tissue distribution, mainly expressed by oligodendrocytes in the central nervous system. Expressed in optic nerve (at protein level).

The protein localises to the cell membrane. The protein resides in the cell junction. It localises to the gap junction. One gap junction consists of a cluster of closely packed pairs of transmembrane channels, the connexons, through which materials of low MW diffuse from one cell to a neighboring cell. May play a role in myelination in central and peripheral nervous systems. This chain is Gap junction gamma-2 protein (Gjc2), found in Rattus norvegicus (Rat).